We begin with the raw amino-acid sequence, 165 residues long: GTPase activating protein 1 (165 aa).

Residues 1-105 (MLGHLVGLVK…VVKMKIEGVA (105 aa)) form the C2 domain. Positions 22, 23, 28, 74, 75, 76, and 81 each coordinate Ca(2+).

It belongs to the plant CAR protein family. Binds to PYR/PYL/RCAR abscisic acid intracellular receptors in an ABA-independent manner, both at the plasma membrane and in the nucleus. Binds phospholipids in a Ca(2+)-dependent manner. Interacts with YchF1.

The protein localises to the cell membrane. It is found in the nucleus. Its subcellular location is the cytoplasm. It localises to the cytosol. In terms of biological role, mediates the transient calcium-dependent interaction of PYR/PYL/RCAR abscisic acid (ABA) receptors with the plasma membrane and thus regulates ABA sensitivity. Stimulates the GTPase/ATPase activities of YchF1, and regulates its subcellular localization. Promotes tolerance towards salinity stress by limiting the accumulation of reactive oxygen species (ROS). Promotes resistance to bacterial pathogens. The polypeptide is GTPase activating protein 1 (Oryza sativa subsp. indica (Rice)).